The primary structure comprises 375 residues: Actin (375 aa).

It belongs to the actin family.

The protein resides in the cytoplasm. The protein localises to the cytoskeleton. The catalysed reaction is ATP + H2O = ADP + phosphate + H(+). In terms of biological role, actins are highly conserved proteins that are involved in various types of cell motility and are ubiquitously expressed in all eukaryotic cells. In Sterkiella cavicola (Ciliate), this protein is Actin.